Reading from the N-terminus, the 651-residue chain is Acetyl-coenzyme A synthetase (651 aa).

CoA is bound by residues 193–196 and Thr-312; that span reads RRGK. ATP-binding positions include 388–390, 412–417, Asp-501, and Arg-516; these read GEP and DTWWQT. Ser-524 is a binding site for CoA. Mg(2+) contacts are provided by Val-538, His-540, and Val-543. Lys-610 carries the N6-acetyllysine modification.

The protein belongs to the ATP-dependent AMP-binding enzyme family. It depends on Mg(2+) as a cofactor. Post-translationally, acetylated. Deacetylation by the SIR2-homolog deacetylase activates the enzyme.

The enzyme catalyses acetate + ATP + CoA = acetyl-CoA + AMP + diphosphate. Its function is as follows. Catalyzes the conversion of acetate into acetyl-CoA (AcCoA), an essential intermediate at the junction of anabolic and catabolic pathways. AcsA undergoes a two-step reaction. In the first half reaction, AcsA combines acetate with ATP to form acetyl-adenylate (AcAMP) intermediate. In the second half reaction, it can then transfer the acetyl group from AcAMP to the sulfhydryl group of CoA, forming the product AcCoA. In Streptomyces coelicolor (strain ATCC BAA-471 / A3(2) / M145), this protein is Acetyl-coenzyme A synthetase.